The following is a 237-amino-acid chain: uncharacterized protein (237 aa).

An N-terminal signal peptide occupies residues 1 to 28 (MVFSFSTFNRLVTFTVMAAIVSVRPLTA).

This is an uncharacterized protein from Sinorhizobium fredii (strain NBRC 101917 / NGR234).